Consider the following 89-residue polypeptide: Large ribosomal subunit protein bL27 (89 aa).

Belongs to the bacterial ribosomal protein bL27 family.

In Bacteroides thetaiotaomicron (strain ATCC 29148 / DSM 2079 / JCM 5827 / CCUG 10774 / NCTC 10582 / VPI-5482 / E50), this protein is Large ribosomal subunit protein bL27.